A 249-amino-acid chain; its full sequence is MEELELPLPTEKLAVDPGREGGKRGVAVLVATGSFNPPTYMHLRMFELAKDELQQRGYSVLGGYMSPVNDAYKKKGLLSAAHRIRLCELACESSSFVMVDRWEAMQKGFQRTLTVLSRIRNALSKDGLADGGSPNVMLLCGSDLLESFSTPGVWIPDQVRIICKDFGVICIRREGKDVEKIISSSEILNECRDNIISVDEIVPNQISSSRVRECIKKCLSIKYLVCDEVIQYIGEHKLYKEADGSDTRK.

The NAD(+) site is built by serine 34 and phenylalanine 35. Positions 42 and 75 each coordinate ATP. Residues threonine 112, glycine 141, aspartate 143, tryptophan 154, arginine 173, and asparagine 204 each coordinate NAD(+). An ATP-binding site is contributed by 209–210 (SR).

It belongs to the eukaryotic NMN adenylyltransferase family. A divalent metal cation serves as cofactor.

It catalyses the reaction beta-nicotinamide D-ribonucleotide + ATP + H(+) = diphosphate + NAD(+). The enzyme catalyses nicotinate beta-D-ribonucleotide + ATP + H(+) = deamido-NAD(+) + diphosphate. It participates in cofactor biosynthesis; NAD(+) biosynthesis; deamido-NAD(+) from nicotinate D-ribonucleotide: step 1/1. The protein operates within cofactor biosynthesis; NAD(+) biosynthesis; NAD(+) from nicotinamide D-ribonucleotide: step 1/1. Its function is as follows. Catalyzes the formation of NAD(+) from nicotinamide mononucleotide (NMN) and ATP. Can also use the deamidated form; nicotinic acid mononucleotide (NaMN) as substrate. In Oryza sativa subsp. japonica (Rice), this protein is Nicotinamide/nicotinic acid mononucleotide adenylyltransferase.